The following is a 946-amino-acid chain: Protein translocase subunit SecA (946 aa).

ATP contacts are provided by residues Gln90, 108 to 112 (GEGKT), and Asp509.

The protein belongs to the SecA family. In terms of assembly, monomer and homodimer. Part of the essential Sec protein translocation apparatus which comprises SecA, SecYEG and auxiliary proteins SecDF. Other proteins may also be involved.

Its subcellular location is the cell inner membrane. The protein resides in the cellular thylakoid membrane. The protein localises to the cytoplasm. The enzyme catalyses ATP + H2O + cellular proteinSide 1 = ADP + phosphate + cellular proteinSide 2.. In terms of biological role, part of the Sec protein translocase complex. Interacts with the SecYEG preprotein conducting channel. Has a central role in coupling the hydrolysis of ATP to the transfer of proteins into and across the cell membrane, serving as an ATP-driven molecular motor driving the stepwise translocation of polypeptide chains across the membrane. Functionally, probably participates in protein translocation into and across both the cytoplasmic and thylakoid membranes in cyanobacterial cells. This is Protein translocase subunit SecA from Synechococcus sp. (strain RCC307).